The chain runs to 156 residues: Small ribosomal subunit protein uS7 (156 aa).

The protein belongs to the universal ribosomal protein uS7 family. As to quaternary structure, part of the 30S ribosomal subunit. Contacts proteins S9 and S11.

Functionally, one of the primary rRNA binding proteins, it binds directly to 16S rRNA where it nucleates assembly of the head domain of the 30S subunit. Is located at the subunit interface close to the decoding center, probably blocks exit of the E-site tRNA. This chain is Small ribosomal subunit protein uS7, found in Rhodospirillum centenum (strain ATCC 51521 / SW).